A 473-amino-acid polypeptide reads, in one-letter code: Mogroside IIIx synthase (473 aa).

The active-site Proton acceptor is H21. D123 functions as the Charge relay in the catalytic mechanism. UDP-alpha-D-glucose-binding residues include T274, Q337, W355, N356, S357, E360, D376, and Q377.

The protein belongs to the UDP-glycosyltransferase family. Highly expressed in mature fruits.

It catalyses the reaction mogroside IIE + UDP-alpha-D-glucose = mogroside IIIX + UDP + H(+). The enzyme catalyses mogroside III + UDP-alpha-D-glucose = siamenoside I + UDP + H(+). It functions in the pathway secondary metabolite biosynthesis; terpenoid biosynthesis. In terms of biological role, UDP-glycosyltransferase involved in the biosynthesis of cucurbitacin and mogroside tetracyclic triterpene natural products (e.g. siamenoside I and mogrosides IV, V and VI). Cucurbitacins have cytotoxic properties and exhibit deterrent taste as a defense barrier against herbivores. Mogrosides are nonsugar highly oxygenated compounds used as high-intensity zero-calorie sweeteners; they also possess pharmacological properties such as regulating immunity, lowering blood sugar and lipid levels, protecting the liver, and acting as antioxidants and antitumor agents. Catalyzes the branched glucosylations of mogroside II-E and mogroside III. The polypeptide is Mogroside IIIx synthase (Siraitia grosvenorii (Monk's fruit)).